We begin with the raw amino-acid sequence, 600 residues long: Elongation factor 4 (600 aa).

A tr-type G domain is found at 5–187; it reads SNIRNFSIIA…ALVERIPAPT (183 aa). GTP contacts are provided by residues 17 to 22 and 134 to 137; these read DHGKST and NKID.

It belongs to the TRAFAC class translation factor GTPase superfamily. Classic translation factor GTPase family. LepA subfamily.

The protein resides in the cell inner membrane. The catalysed reaction is GTP + H2O = GDP + phosphate + H(+). Functionally, required for accurate and efficient protein synthesis under certain stress conditions. May act as a fidelity factor of the translation reaction, by catalyzing a one-codon backward translocation of tRNAs on improperly translocated ribosomes. Back-translocation proceeds from a post-translocation (POST) complex to a pre-translocation (PRE) complex, thus giving elongation factor G a second chance to translocate the tRNAs correctly. Binds to ribosomes in a GTP-dependent manner. In Psychrobacter sp. (strain PRwf-1), this protein is Elongation factor 4.